The primary structure comprises 62 residues: Conotoxin Sr5.7 (62 aa).

The first 22 residues, 1 to 22 (MRCLPVFVILLLLIASAPSVDA), serve as a signal peptide directing secretion. Positions 23 to 44 (QLKTKDDVPLASFHDNAKGTQH) are excised as a propeptide.

The protein belongs to the conotoxin T superfamily. Contains 2 disulfide bonds that can be either 'C1-C3, C2-C4' or 'C1-C4, C2-C3', since these disulfide connectivities have been observed for conotoxins with cysteine framework V (for examples, see AC P0DQQ7 and AC P81755). Expressed by the venom duct.

Its subcellular location is the secreted. The sequence is that of Conotoxin Sr5.7 from Conus spurius (Alphabet cone).